The chain runs to 360 residues: Ankyrin repeat domain-containing protein 2 (360 aa).

Residues 5–120 are may mediate interaction with PML, p53/TP53 and YBX1; that stretch reads PSWAGVGALA…GIQNLIELRK (116 aa). Serine 99 bears the Phosphoserine; by PKB/AKT2 mark. The tract at residues 126-147 is disordered; sequence KRDALAASHEPPPEPEEITGPV. The span at 138–147 shows a compositional bias: acidic residues; sequence PEPEEITGPV. ANK repeat units lie at residues 147 to 176, 180 to 209, 213 to 242, 246 to 275, and 279 to 308; these read VDEETFLKAAVEGKMKVIEKFLADGGSADT, FRRTALHRASLEGHMEILEKLLDNGATVDF, LDCTAMHWACRGGHLEVVKLLQSHGADTNV, LLSTPLHVAVRTGQVEIVEHFLSLGLEINA, and EGDTALHDAVRLNRYKIIKLLLLHGADMMT. The span at 330-342 shows a compositional bias: basic and acidic residues; sequence ALEHPEPGAEHNG. The tract at residues 330–360 is disordered; it reads ALEHPEPGAEHNGLEGPNDSGRETPQPVPAQ.

Interacts with ID3; both proteins cooperate in myoblast differentiation. Interacts with TTN/titin. Interacts (via ANK repeats) with TCAP; the interaction is direct. Interacts with TJP1 (via PDZ domains). Interacts with PML; the interaction is direct. Interacts with p53/TP53. Interacts with YBX1. Interacts with AKT2. Phosphorylation at Ser-99 by PKB/AKT2 in response to oxidative stress induces translocation to the nucleus and negatively regulates myoblast differentiation. As to expression, mostly expressed in skeletal and cardiac muscles. Found in slow fibers. Also expressed in kidney, but to a lower extent (at protein level).

The protein resides in the cytoplasm. Its subcellular location is the myofibril. The protein localises to the sarcomere. It is found in the i band. It localises to the cytosol. The protein resides in the nucleus. Its subcellular location is the PML body. Functionally, functions as a negative regulator of myocyte differentiation. May interact with both sarcoplasmic structural proteins and nuclear proteins to regulate gene expression during muscle development and in response to muscle stress. In Homo sapiens (Human), this protein is Ankyrin repeat domain-containing protein 2 (ANKRD2).